The chain runs to 471 residues: UDP-N-acetylmuramoylalanine--D-glutamate ligase (471 aa).

An ATP-binding site is contributed by 127 to 133 (GSNGKST).

Belongs to the MurCDEF family.

The protein resides in the cytoplasm. The enzyme catalyses UDP-N-acetyl-alpha-D-muramoyl-L-alanine + D-glutamate + ATP = UDP-N-acetyl-alpha-D-muramoyl-L-alanyl-D-glutamate + ADP + phosphate + H(+). The protein operates within cell wall biogenesis; peptidoglycan biosynthesis. Its function is as follows. Cell wall formation. Catalyzes the addition of glutamate to the nucleotide precursor UDP-N-acetylmuramoyl-L-alanine (UMA). This chain is UDP-N-acetylmuramoylalanine--D-glutamate ligase, found in Colwellia psychrerythraea (strain 34H / ATCC BAA-681) (Vibrio psychroerythus).